The chain runs to 754 residues: MLGAMLHTLLLLLLAELGALLASGPESQSSFLEIIFPEKIEDKTHSEEQISYIIPINKKQYTVHLQKRYFLTNRFMVYMYNQGSTSFHSPNIPAQCYYQGHIKGYPNSVATLSTCSGLRGFLQFENVSYGIEPLQSAFTSQHIVYKLGNKEKELIFNKNSRNIEMPTNYGILINKKPKSPFKNLFPLYLEMSIVVDKALYDYLGSDSNIVTNKIIEIISLINSVFAQLKVTIVLSSLELWSDKNKIPTVGEADELLHKFLEWKQAYLTLRPHDVAYLFIYNEYPNYMGATYPGKMCTAHYSAGITMYPKDMTLEAFSVILTQMLGLSLGISYDEPEKCYCSESICIMNPRAMQYGGVKSFSNCSLNDFEHFKSNEGAKCLQNKPQMQRTAAAVCGNGKVEGDEICDCGSEAECGPDSCCEPNRCVLKAGRACDSKSPSSTCCKNCQFLPEKHQCRPEKHLYCDIPEVCNGSSGNCPPDVTINNGHVCKESGTICYNGDCPDLDRVCESIYGAGSVNAPFACYEEIQGQNDRFGNCGKDNRNRYVFCGWRNLICGRLICTYPTRMPYNPPNNSTASVIYAFVRDKVCITVDFGSSVKEDPLRVANGATCDLDRICLNGVCVESRFLRDQSKTCSSKCHGNGVCNSHGVCHCNAGYSPPNCQYPTTKRSASLWSGKHDLPMERASKNQEKKWLLSLYIVLIILASVFLIGTGWKGLKQCGSKEEESMSSESKSEDSTYTYVSRSTSETSSMTSTSS.

The first 22 residues, 1 to 22 (MLGAMLHTLLLLLLAELGALLA), serve as a signal peptide directing secretion. Ser-23 carries the post-translational modification Phosphoserine. The propeptide occupies 23-176 (SGPESQSSFL…TNYGILINKK (154 aa)). An N-linked (GlcNAc...) asparagine glycan is attached at Asn-126. At 177-689 (PKSPFKNLFP…ERASKNQEKK (513 aa)) the chain is on the extracellular side. Residues 187-384 (LYLEMSIVVD…EGAKCLQNKP (198 aa)) form the Peptidase M12B domain. Intrachain disulfides connect Cys-296–Cys-379, Cys-338–Cys-363, Cys-340–Cys-345, and Cys-454–Cys-475. Asn-362, Asn-469, Asn-570, and Asn-571 each carry an N-linked (GlcNAc...) asparagine glycan. In terms of domain architecture, Disintegrin spans 391–483 (AAVCGNGKVE…NCPPDVTINN (93 aa)). An EGF-like domain is found at 628–660 (QSKTCSSKCHGNGVCNSHGVCHCNAGYSPPNCQ). 3 cysteine pairs are disulfide-bonded: Cys-632–Cys-642, Cys-636–Cys-648, and Cys-650–Cys-659. A helical membrane pass occupies residues 690–710 (WLLSLYIVLIILASVFLIGTG). Residues 711–754 (WKGLKQCGSKEEESMSSESKSEDSTYTYVSRSTSETSSMTSTSS) are Cytoplasmic-facing. Residues 720–733 (KEEESMSSESKSED) show a composition bias toward basic and acidic residues. Positions 720–754 (KEEESMSSESKSEDSTYTYVSRSTSETSSMTSTSS) are disordered. Residues 734 to 754 (STYTYVSRSTSETSSMTSTSS) show a composition bias toward low complexity.

Expressed in sperm (at protein level). Highly expressed in the testis and weakly expressed in the epididymis, brain and heart.

The protein localises to the membrane. Its function is as follows. May play a role in sperm development and fertilization This is a non-catalytic metalloprotease-like protein. This chain is Disintegrin and metalloproteinase domain-containing protein 32, found in Mus musculus (Mouse).